Reading from the N-terminus, the 51-residue chain is Large ribosomal subunit protein bL33 (51 aa).

It belongs to the bacterial ribosomal protein bL33 family.

This is Large ribosomal subunit protein bL33 from Acidithiobacillus ferrooxidans (strain ATCC 53993 / BNL-5-31) (Leptospirillum ferrooxidans (ATCC 53993)).